The sequence spans 342 residues: MPILRSVAAVLAPFTSDTYMNTADSIFVITVTILTSIGFLLNLLLLYLIIWKSPRNLTPYRIFLANTTITQLVYALFAVTSMPRVLAKHQYTIVIYLGPVQFFGEWFSYMSYVGILHLSLNSFISLMLSMIYRYFSIRFKRFTANTSIILCIIGYFFPFLIFASCSNIAISSSLSFNTAVLDGMVENLESYHMVLTTEISNHPSLIILTLAVTCGLVPIYFVMYWCRHQIHKTLKQTRSVHSPSTRDNARRLVRALTIQSIIPLVSVFPASIFWCLSQLGFVEPTMYSYFIIPCLSLGCIADPVVTIRCVLPYRRWILKLCNMSTTDMITSNQDKSTIFQKH.

The next 7 membrane-spanning stretches (helical) occupy residues 26–46 (IFVITVTILTSIGFLLNLLLL), 62–82 (IFLANTTITQLVYALFAVTSM), 112–132 (YVGILHLSLNSFISLMLSMIY), 148–168 (IILCIIGYFFPFLIFASCSNI), 205–225 (LIILTLAVTCGLVPIYFVMYW), 261–281 (IIPLVSVFPASIFWCLSQLGF), and 287–307 (YSYFIIPCLSLGCIADPVVTI).

It belongs to the nematode receptor-like protein srd family.

It localises to the membrane. This is Serpentine receptor class delta-33 (srd-33) from Caenorhabditis elegans.